The sequence spans 443 residues: Phosphoglucosamine mutase (443 aa).

Ser-101 acts as the Phosphoserine intermediate in catalysis. Mg(2+)-binding residues include Ser-101, Asp-239, Asp-241, and Asp-243. Ser-101 bears the Phosphoserine mark.

Belongs to the phosphohexose mutase family. It depends on Mg(2+) as a cofactor. Activated by phosphorylation.

It catalyses the reaction alpha-D-glucosamine 1-phosphate = D-glucosamine 6-phosphate. Functionally, catalyzes the conversion of glucosamine-6-phosphate to glucosamine-1-phosphate. This Francisella tularensis subsp. tularensis (strain WY96-3418) protein is Phosphoglucosamine mutase.